We begin with the raw amino-acid sequence, 1441 residues long: uncharacterized protein (1441 aa).

Disordered regions lie at residues 1–95 (MGFL…EVIS), 150–204 (NGGI…QQQF), 224–289 (KPHQ…GEGE), 401–477 (HSNG…QLHQ), 529–661 (RHES…QPQQ), 680–760 (LNKD…KSQT), 776–810 (RKSS…HIQQ), 849–899 (QQQF…TQQL), 980–1118 (RGGS…DNNN), 1161–1185 (KSLK…NENN), 1209–1321 (NIES…YRSY), 1348–1402 (GHNS…HIFF), and 1421–1441 (LKFN…SILE). The span at 19–38 (NDNSFDGGSSSYNNNNNNNN) shows a compositional bias: low complexity. The segment covering 39 to 56 (QPITYTPTAIRSPNNKTM) has biased composition (polar residues). 6 stretches are compositionally biased toward low complexity: residues 57–91 (SQSQ…GNGN), 153–187 (ISQP…TTTP), 227–283 (QQQQ…SLQN), 416–445 (NNNN…GINN), 555–564 (GNTDGVNIDN), and 572–635 (NNNN…TNNT). Positions 636–645 (ATPSVINGDS) are enriched in polar residues. Composition is skewed to low complexity over residues 648–661 (QEQP…QPQQ) and 680–700 (LNKD…DDNN). Residues 703–720 (SREEMENILKKSQQDSNK) are compositionally biased toward basic and acidic residues. Residues 729–751 (EDSNSGSPTFQDFQSSAAASNVS) are compositionally biased toward polar residues. Composition is skewed to low complexity over residues 780–810 (DSLN…HIQQ) and 849–880 (QQQF…NSGS). Over residues 881–892 (INGGSNSGGGGV) the composition is skewed to gly residues. Residues 981–994 (GGSTNRTTPPFLTP) are compositionally biased toward polar residues. Residues 995-1067 (NTSQTNLSSL…NKQTANNTTN (73 aa)) show a composition bias toward low complexity. Over residues 1068-1087 (DFSFDQNTDLRSSTNSLTIG) the composition is skewed to polar residues. Positions 1088–1118 (SNSNFSSLKNSLNLENPENNNNPDKNVDNNN) are enriched in low complexity. Low complexity-rich tracts occupy residues 1225-1249 (DNNN…SLRN) and 1257-1291 (NISN…NNNE). A compositionally biased stretch (basic and acidic residues) spans 1362–1373 (RHKDSIGDKEMD).

This is an uncharacterized protein from Dictyostelium discoideum (Social amoeba).